The following is a 140-amino-acid chain: Putative pre-16S rRNA nuclease (140 aa).

The protein belongs to the YqgF nuclease family.

Its subcellular location is the cytoplasm. Its function is as follows. Could be a nuclease involved in processing of the 5'-end of pre-16S rRNA. This chain is Putative pre-16S rRNA nuclease, found in Chlorobium chlorochromatii (strain CaD3).